We begin with the raw amino-acid sequence, 417 residues long: Equilibrative nucleotide transporter 2 (417 aa).

The next 11 membrane-spanning stretches (helical) occupy residues 20–40, 52–72, 85–105, 109–129, 144–164, 185–205, 265–285, 292–312, 328–348, 354–374, and 393–413; these read AVCW…LTIV, PSRI…SVLV, LFGY…NLAT, GGIG…LADA, PEFL…TSGL, LFFA…AYVF, LAVT…GFLS, SLGD…DLVG, CLLI…ITGI, WMIF…VCVI, and LVLY…LWLV.

It belongs to the SLC29A/ENT transporter (TC 2.A.57) family. In terms of tissue distribution, expressed in leaves and flowers.

Its subcellular location is the cell membrane. May be involved in nucleoside transport. The protein is Equilibrative nucleotide transporter 2 (ENT2) of Arabidopsis thaliana (Mouse-ear cress).